The following is a 127-amino-acid chain: Small ribosomal subunit protein uS17m (127 aa).

Belongs to the universal ribosomal protein uS17 family.

It is found in the mitochondrion. This is Small ribosomal subunit protein uS17m (mrps17) from Dictyostelium discoideum (Social amoeba).